Consider the following 749-residue polypeptide: Protein kinase domain-containing protein ppk32 (749 aa).

The Protein kinase domain occupies 21 to 317 (IQKENSVQVG…MFELERSPYF (297 aa)). 2 disordered regions span residues 598–677 (KKLQ…VTAK) and 706–749 (PLIP…KSLL). A compositionally biased stretch (polar residues) spans 602–651 (SKPSSVVPNRITTDPFSSQTKEATSKPSSISPNKATTNIFTSQASLSSQG). A Phosphoserine modification is found at Ser-632. 2 stretches are compositionally biased toward low complexity: residues 657 to 670 (SSASSYRSYSQRAS) and 721 to 735 (NRRVTTPVVNQNTVT).

The protein localises to the cytoplasm. The sequence is that of Protein kinase domain-containing protein ppk32 (ppk32) from Schizosaccharomyces pombe (strain 972 / ATCC 24843) (Fission yeast).